The following is a 543-amino-acid chain: CTP synthase (543 aa).

Residues 1–265 (MARYIFITGG…DDEVLAAFAI (265 aa)) are amidoligase domain. S13 provides a ligand contact to CTP. S13 serves as a coordination point for UTP. 14–19 (SLGKGL) lines the ATP pocket. Y54 is a binding site for L-glutamine. Residue D71 participates in ATP binding. Positions 71 and 139 each coordinate Mg(2+). CTP is bound by residues 146 to 148 (DIE), 186 to 191 (KTKPTQ), and K222. UTP-binding positions include 186–191 (KTKPTQ) and K222. ATP is bound at residue 238–240 (RDA). Residues 291–542 (TIAIVGKYTG…IEAALVRSRL (252 aa)) enclose the Glutamine amidotransferase type-1 domain. G353 is a binding site for L-glutamine. C380 (nucleophile; for glutamine hydrolysis) is an active-site residue. L-glutamine contacts are provided by residues 381–384 (FGMQ), E404, and R470. Active-site residues include H515 and E517.

It belongs to the CTP synthase family. As to quaternary structure, homotetramer.

It carries out the reaction UTP + L-glutamine + ATP + H2O = CTP + L-glutamate + ADP + phosphate + 2 H(+). It catalyses the reaction L-glutamine + H2O = L-glutamate + NH4(+). The catalysed reaction is UTP + NH4(+) + ATP = CTP + ADP + phosphate + 2 H(+). It participates in pyrimidine metabolism; CTP biosynthesis via de novo pathway; CTP from UDP: step 2/2. With respect to regulation, allosterically activated by GTP, when glutamine is the substrate; GTP has no effect on the reaction when ammonia is the substrate. The allosteric effector GTP functions by stabilizing the protein conformation that binds the tetrahedral intermediate(s) formed during glutamine hydrolysis. Inhibited by the product CTP, via allosteric rather than competitive inhibition. In terms of biological role, catalyzes the ATP-dependent amination of UTP to CTP with either L-glutamine or ammonia as the source of nitrogen. Regulates intracellular CTP levels through interactions with the four ribonucleotide triphosphates. The polypeptide is CTP synthase (Rhodopseudomonas palustris (strain BisB5)).